An 884-amino-acid polypeptide reads, in one-letter code: Valine--tRNA ligase (884 aa).

The 'HIGH' region signature appears at 47–57; sequence PNVTGALHIGH. Positions 525–529 match the 'KMSKS' region motif; sequence KMSKS. ATP is bound at residue lysine 528. A coiled-coil region spans residues 812–884; the sequence is AVDFEAELAR…QQRFRDAIGK (73 aa).

This sequence belongs to the class-I aminoacyl-tRNA synthetase family. ValS type 1 subfamily. In terms of assembly, monomer.

The protein localises to the cytoplasm. The catalysed reaction is tRNA(Val) + L-valine + ATP = L-valyl-tRNA(Val) + AMP + diphosphate. Catalyzes the attachment of valine to tRNA(Val). As ValRS can inadvertently accommodate and process structurally similar amino acids such as threonine, to avoid such errors, it has a 'posttransfer' editing activity that hydrolyzes mischarged Thr-tRNA(Val) in a tRNA-dependent manner. The sequence is that of Valine--tRNA ligase from Nitratidesulfovibrio vulgaris (strain ATCC 29579 / DSM 644 / CCUG 34227 / NCIMB 8303 / VKM B-1760 / Hildenborough) (Desulfovibrio vulgaris).